The sequence spans 188 residues: MKLDVFAGQEISELSMIEVARAILEERGRDNDMYFSDLVNEIQNYLGKSDADIRYALPFFYTDLNTDGSFIPLGENKWGLRSWYAIDEIDEEIITLEDEEDGAPKRKKKRVNAFMDGDEDAIDYSADDPEDEDFVRESSDIEYDEEDPDDEKSEVESYDSELNEIIPEDDFEEVDLNEEDEEDEEEEE.

Residues 14-83 (LSMIEVARAI…GENKWGLRSW (70 aa)) enclose the HTH HARE-type domain. The tract at residues 119 to 188 (EDAIDYSADD…EDEEDEEEEE (70 aa)) is disordered.

The protein belongs to the RpoE family. As to quaternary structure, RNAP is composed of a core of 2 alpha, a beta and a beta' subunits. The core is associated with a delta subunit and one of several sigma factors.

Its function is as follows. Participates in both the initiation and recycling phases of transcription. In the presence of the delta subunit, RNAP displays an increased specificity of transcription, a decreased affinity for nucleic acids, and an increased efficiency of RNA synthesis because of enhanced recycling. In Streptococcus equi subsp. equi (strain 4047), this protein is Probable DNA-directed RNA polymerase subunit delta.